A 269-amino-acid chain; its full sequence is 4-hydroxy-tetrahydrodipicolinate reductase (269 aa).

NAD(+)-binding positions include 9–14 (GAGGRM) and Glu35. Arg36 contributes to the NADP(+) binding site. NAD(+) contacts are provided by residues 98-100 (GTT) and 122-125 (ASNY). His155 functions as the Proton donor/acceptor in the catalytic mechanism. Residue His156 coordinates (S)-2,3,4,5-tetrahydrodipicolinate. Residue Lys159 is the Proton donor of the active site. Position 165–166 (165–166 (GT)) interacts with (S)-2,3,4,5-tetrahydrodipicolinate.

Belongs to the DapB family.

The protein resides in the cytoplasm. The catalysed reaction is (S)-2,3,4,5-tetrahydrodipicolinate + NAD(+) + H2O = (2S,4S)-4-hydroxy-2,3,4,5-tetrahydrodipicolinate + NADH + H(+). The enzyme catalyses (S)-2,3,4,5-tetrahydrodipicolinate + NADP(+) + H2O = (2S,4S)-4-hydroxy-2,3,4,5-tetrahydrodipicolinate + NADPH + H(+). The protein operates within amino-acid biosynthesis; L-lysine biosynthesis via DAP pathway; (S)-tetrahydrodipicolinate from L-aspartate: step 4/4. In terms of biological role, catalyzes the conversion of 4-hydroxy-tetrahydrodipicolinate (HTPA) to tetrahydrodipicolinate. This Actinobacillus pleuropneumoniae serotype 7 (strain AP76) protein is 4-hydroxy-tetrahydrodipicolinate reductase.